Here is a 110-residue protein sequence, read N- to C-terminus: Small ribosomal subunit protein bS16 (110 aa).

Residues 84–110 (KRAPRNNPEKAVPRKERKAAAEAAAKA) form a disordered region. Residues 90 to 103 (NPEKAVPRKERKAA) are compositionally biased toward basic and acidic residues.

This sequence belongs to the bacterial ribosomal protein bS16 family.

The protein is Small ribosomal subunit protein bS16 of Afipia carboxidovorans (strain ATCC 49405 / DSM 1227 / KCTC 32145 / OM5) (Oligotropha carboxidovorans).